Consider the following 272-residue polypeptide: Tryptophan synthase alpha chain (272 aa).

Active-site proton acceptor residues include E49 and D60.

Belongs to the TrpA family. In terms of assembly, tetramer of two alpha and two beta chains.

The catalysed reaction is (1S,2R)-1-C-(indol-3-yl)glycerol 3-phosphate + L-serine = D-glyceraldehyde 3-phosphate + L-tryptophan + H2O. It functions in the pathway amino-acid biosynthesis; L-tryptophan biosynthesis; L-tryptophan from chorismate: step 5/5. Functionally, the alpha subunit is responsible for the aldol cleavage of indoleglycerol phosphate to indole and glyceraldehyde 3-phosphate. This chain is Tryptophan synthase alpha chain, found in Hydrogenovibrio crunogenus (strain DSM 25203 / XCL-2) (Thiomicrospira crunogena).